The chain runs to 149 residues: Histone H2B.3, sperm (149 aa).

The disordered stretch occupies residues 1–57; it reads MPRSPAKTSPRKGSPRKGSPRKGSPSRKASPKRGGKGAKRAGKGGRRRRVVKRRRRR. 6 consecutive short sequence motifs (SPKK motif) follow at residues 4-7, 9-12, 14-17, 19-22, 24-27, and 30-33; these read SPAK, SPRK, SPSR, and SPKR. A compositionally biased stretch (basic residues) spans 9-20; it reads SPRKGSPRKGSP. 3 positions are modified to phosphoserine: Ser-19, Ser-24, and Ser-30. Residues 29-57 are compositionally biased toward basic residues; that stretch reads ASPKRGGKGAKRAGKGGRRRRVVKRRRRR. An O-linked (GlcNAc) serine glycan is attached at Ser-136. Residue Lys-144 forms a Glycyl lysine isopeptide (Lys-Gly) (interchain with G-Cter in ubiquitin) linkage.

Belongs to the histone H2B family. The nucleosome is a histone octamer containing two molecules each of H2A, H2B, H3 and H4 assembled in one H3-H4 heterotetramer and two H2A-H2B heterodimers. The octamer wraps approximately 147 bp of DNA. In terms of processing, monoubiquitination of Lys-144 gives a specific tag for epigenetic transcriptional activation and is also prerequisite for histone H3 'Lys-4' and 'Lys-79' methylation. Phosphorylated on SPKK motifs 4, 5 and 6; which may regulate DNA binding. Dephosphorylated during maturation of spermatids to mature sperm and rephosphorylated at fertilization. Post-translationally, glcNAcylation at Ser-136 promotes monoubiquitination of Lys-144. It fluctuates in response to extracellular glucose, and associates with transcribed genes.

Its subcellular location is the nucleus. It localises to the chromosome. In terms of biological role, core component of nucleosome. Nucleosomes wrap and compact DNA into chromatin, limiting DNA accessibility to the cellular machineries which require DNA as a template. Histones thereby play a central role in transcription regulation, DNA repair, DNA replication and chromosomal stability. DNA accessibility is regulated via a complex set of post-translational modifications of histones, also called histone code, and nucleosome remodeling. The polypeptide is Histone H2B.3, sperm (Parechinus angulosus (Angulate sea urchin)).